The chain runs to 37 residues: Brevinin-2DYe (37 aa).

Cys-31 and Cys-37 form a disulfide bridge.

In terms of tissue distribution, expressed by the skin glands.

It localises to the secreted. Its function is as follows. Antimicrobial peptide. Active against the Gram-positive bacterium S.aureus (MIC=15 uM) and the Gram-negative bacterium E.coli (MIC=30 uM). The polypeptide is Brevinin-2DYe (Rana dybowskii (Dybovsky's frog)).